Consider the following 149-residue polypeptide: Myosin, essential light chain (149 aa).

EF-hand domains follow at residues 7–42 and 79–114; these read SMID…FGLN and GSYE…LGEK.

In terms of assembly, myosin is a hexamer of 2 heavy chains and 4 light chains (two regulatory light chains and two essential light chains).

The protein is Myosin, essential light chain of Branchiostoma floridae (Florida lancelet).